The chain runs to 885 residues: Rho GTPase-activating protein gacFF (885 aa).

The segment covering 168-182 has biased composition (low complexity); the sequence is TTTNNSNNSNSNNNN. A disordered region spans residues 168-187; it reads TTTNNSNNSNSNNNNKQYNS. Positions 222-249 form a coiled coil; that stretch reads LINKIQNDSEQLKLVLSQVEQQIEFLKS. Residues 348–394 form the F-box domain; it reads SDIFSLLPTHLTLYVFSYLEPKELLILAQVSSQWQKLAGDNLLWVRF. The PH domain maps to 464 to 571; sequence SSSKEGWLYK…WMILLNSIIK (108 aa). Low complexity-rich tracts occupy residues 594–622 and 629–648; these read NNVY…NNNN and LPPL…SSTG. A disordered region spans residues 594 to 680; sequence NNVYINNNNN…GGGSGGNNNF (87 aa). Positions 701–885 constitute a Rho-GAP domain; that stretch reads VALSKILENQ…KYYDEIFIKK (185 aa).

It is found in the cytoplasm. Its function is as follows. Rho GTPase-activating protein involved in the signal transduction pathway. This Dictyostelium discoideum (Social amoeba) protein is Rho GTPase-activating protein gacFF (gacFF).